We begin with the raw amino-acid sequence, 61 residues long: MAKKTVKVTQVKSSSGRLKAHRACISGLGLRRIGHTVEVEDTPSVRGMINKVYYMVQVEGE.

It belongs to the universal ribosomal protein uL30 family. As to quaternary structure, part of the 50S ribosomal subunit.

The sequence is that of Large ribosomal subunit protein uL30 from Saccharophagus degradans (strain 2-40 / ATCC 43961 / DSM 17024).